We begin with the raw amino-acid sequence, 220 residues long: Superoxide dismutase [Fe] (220 aa).

Residues H26, H73, D164, and H168 each contribute to the Fe cation site.

It belongs to the iron/manganese superoxide dismutase family. As to quaternary structure, homodimer. It depends on Fe cation as a cofactor.

It carries out the reaction 2 superoxide + 2 H(+) = H2O2 + O2. In terms of biological role, destroys superoxide anion radicals which are normally produced within the cells and which are toxic to biological systems. This Campylobacter jejuni subsp. jejuni serotype O:2 (strain ATCC 700819 / NCTC 11168) protein is Superoxide dismutase [Fe] (sodB).